The primary structure comprises 344 residues: MRIEALNTAPDATEARFEEQIRPQKMGDFAGQKKLIDNLKVFITAARKRGEALDHVLLSGPPGLGKTTLAHIIAAEMGGSIKITSGPLIDKAGNLAGLLTSMKKGDILFIDEIHRLAPAVEEYLYSAMEDYRIDILLDSGPASRAVQLKLEPFTLVGATTRAGLLTSPLRARFGINSRLDYYNPELLQSIIIRAAGILNIGIDEDAAMEIARRSRGTPRIANRLLRRARDFAQVAGDASISLAVARRTLESLEIDEGGLDDMDKKILEAIVRKFNGGPVGLASLAVSVGEEQDTIEEVYEPYLIQMGYLSRTPRGRVATRLAMSRFAHPGISSQGSLFDTAEDG.

The interval 1–182 (MRIEALNTAP…FGINSRLDYY (182 aa)) is large ATPase domain (RuvB-L). Residues I21, R22, G63, K66, T67, T68, 129-131 (EDY), R172, Y182, and R219 contribute to the ATP site. Residue T67 coordinates Mg(2+). Positions 183 to 253 (NPELLQSIII…VARRTLESLE (71 aa)) are small ATPAse domain (RuvB-S). A head domain (RuvB-H) region spans residues 256 to 344 (EGGLDDMDKK…GSLFDTAEDG (89 aa)). Residues R311 and R316 each coordinate DNA.

The protein belongs to the RuvB family. Homohexamer. Forms an RuvA(8)-RuvB(12)-Holliday junction (HJ) complex. HJ DNA is sandwiched between 2 RuvA tetramers; dsDNA enters through RuvA and exits via RuvB. An RuvB hexamer assembles on each DNA strand where it exits the tetramer. Each RuvB hexamer is contacted by two RuvA subunits (via domain III) on 2 adjacent RuvB subunits; this complex drives branch migration. In the full resolvosome a probable DNA-RuvA(4)-RuvB(12)-RuvC(2) complex forms which resolves the HJ.

The protein resides in the cytoplasm. It carries out the reaction ATP + H2O = ADP + phosphate + H(+). In terms of biological role, the RuvA-RuvB-RuvC complex processes Holliday junction (HJ) DNA during genetic recombination and DNA repair, while the RuvA-RuvB complex plays an important role in the rescue of blocked DNA replication forks via replication fork reversal (RFR). RuvA specifically binds to HJ cruciform DNA, conferring on it an open structure. The RuvB hexamer acts as an ATP-dependent pump, pulling dsDNA into and through the RuvAB complex. RuvB forms 2 homohexamers on either side of HJ DNA bound by 1 or 2 RuvA tetramers; 4 subunits per hexamer contact DNA at a time. Coordinated motions by a converter formed by DNA-disengaged RuvB subunits stimulates ATP hydrolysis and nucleotide exchange. Immobilization of the converter enables RuvB to convert the ATP-contained energy into a lever motion, pulling 2 nucleotides of DNA out of the RuvA tetramer per ATP hydrolyzed, thus driving DNA branch migration. The RuvB motors rotate together with the DNA substrate, which together with the progressing nucleotide cycle form the mechanistic basis for DNA recombination by continuous HJ branch migration. Branch migration allows RuvC to scan DNA until it finds its consensus sequence, where it cleaves and resolves cruciform DNA. This Chlorobaculum tepidum (strain ATCC 49652 / DSM 12025 / NBRC 103806 / TLS) (Chlorobium tepidum) protein is Holliday junction branch migration complex subunit RuvB.